Here is a 407-residue protein sequence, read N- to C-terminus: Acetate kinase (407 aa).

A Mg(2+)-binding site is contributed by asparagine 10. Lysine 17 contacts ATP. Arginine 93 contacts substrate. Aspartate 150 functions as the Proton donor/acceptor in the catalytic mechanism. ATP-binding positions include 210–214, 284–286, and 332–336; these read HLGNG, DMR, and GVGEN. Glutamate 386 is a binding site for Mg(2+).

It belongs to the acetokinase family. In terms of assembly, homodimer. It depends on Mg(2+) as a cofactor. Mn(2+) is required as a cofactor.

The protein resides in the cytoplasm. The enzyme catalyses acetate + ATP = acetyl phosphate + ADP. The protein operates within metabolic intermediate biosynthesis; acetyl-CoA biosynthesis; acetyl-CoA from acetate: step 1/2. Catalyzes the formation of acetyl phosphate from acetate and ATP. Can also catalyze the reverse reaction. In Streptomyces coelicolor (strain ATCC BAA-471 / A3(2) / M145), this protein is Acetate kinase.